Here is a 390-residue protein sequence, read N- to C-terminus: Stearoyl-[acyl-carrier-protein] 9-desaturase, chloroplastic (390 aa).

A chloroplast-targeting transit peptide spans M1–M27. Fe cation contacts are provided by E132, E170, H173, E223, E256, and H259.

This sequence belongs to the fatty acid desaturase type 2 family. Homodimer. Fe(2+) serves as cofactor.

It localises to the plastid. It is found in the chloroplast. The catalysed reaction is octadecanoyl-[ACP] + 2 reduced [2Fe-2S]-[ferredoxin] + O2 + 2 H(+) = (9Z)-octadecenoyl-[ACP] + 2 oxidized [2Fe-2S]-[ferredoxin] + 2 H2O. Its pathway is lipid metabolism; fatty acid metabolism. Converts stearoyl-ACP to oleoyl-ACP by introduction of a cis double bond between carbons 9 and 10 of the acyl chain. In Olea europaea (Common olive), this protein is Stearoyl-[acyl-carrier-protein] 9-desaturase, chloroplastic.